The following is a 356-amino-acid chain: Peptide chain release factor 1 (356 aa).

The residue at position 234 (glutamine 234) is an N5-methylglutamine.

This sequence belongs to the prokaryotic/mitochondrial release factor family. In terms of processing, methylated by PrmC. Methylation increases the termination efficiency of RF1.

Its subcellular location is the cytoplasm. Functionally, peptide chain release factor 1 directs the termination of translation in response to the peptide chain termination codons UAG and UAA. The polypeptide is Peptide chain release factor 1 (Exiguobacterium sp. (strain ATCC BAA-1283 / AT1b)).